The following is a 629-amino-acid chain: tRNA uridine 5-carboxymethylaminomethyl modification enzyme MnmG (629 aa).

An FAD-binding site is contributed by 13–18; sequence GGGHAG. An NAD(+)-binding site is contributed by 273–287; the sequence is GPRYCPSIEDKVNRF.

The protein belongs to the MnmG family. Homodimer. Heterotetramer of two MnmE and two MnmG subunits. FAD serves as cofactor.

It is found in the cytoplasm. In terms of biological role, NAD-binding protein involved in the addition of a carboxymethylaminomethyl (cmnm) group at the wobble position (U34) of certain tRNAs, forming tRNA-cmnm(5)s(2)U34. The polypeptide is tRNA uridine 5-carboxymethylaminomethyl modification enzyme MnmG (Hahella chejuensis (strain KCTC 2396)).